The sequence spans 1088 residues: MSYNPYRSRNYGGGYSNNGYRQRHYYSDYNESSYNSSYRDQYDRNGSYSGSKGRHYNSGTSRNAPPPSSSAYSSDSSSRTYANSSSSGPAKIPVGPKSLTIDGSTNGDLPTAGTQKHNIPPTNAISGTDATTGVNPNDSNFTQLLLHQDLSKQIEFSGEIDSKRNYKVIYDPELDKSLSKAERKTKQKKIRFNGESLSSHDVTDPRKSSTGSTSAYFLKPNKKSKKFPFKQLPQPKFIYDKDSLGPPPQNEIVVWDLPSTTSEVYLSNFFKSYGDSIKDLKFINDPLNAVPLGIATCKFQGNPDKSMRIAKKFIANVRINHTKIDGAELKIALNDNDNKLLDDKIKVAQDKLRISRIKIEEEEKKRLKKQQAIEDQKRRETEKAAKEKKLQESANSSHESRFKPNTTTLSIRHHNEVIPGVFLPRELRKYIRDRPYIFINDKYVPTRKVSSQDIKKVLNKYDWTRVLPDRSGFFVVFNSIKECERCFINEDGRKFFEYKMFMELALPENFNESSSSTSNNDNTDLSASNRKQNDVVEEASNMLIKEFQNFLAKDIRERVIAPVVLDLLSHDKYPKLVEELKAKELATKKAASPIVTNAVRQVKSKPNVLSSLAIKSKPQAILPSFRKKKDLPNAGLNSANKAKKNVIPMQHALNYDHESDESDEDDSTRSTTPLTPTLKRERSPTVSSVSNDNDIEDKLEDIQKPSKKKQKKTKLHQSFLYDSASDEDMEAVSEEKEVEKDESEGEEDIDYSHIDKIYQPTEDYPRPVYEEVPRFPSDPLDLDALQSIIKDDEDITLLQTALADVTSESNIKNMEYWAWKQKDIKAKAGVQEISEDLEVIGPLDSRFDSKSGAFKSEGYRKIPDADKIEYLPHRRKIHKPIKTIQHDDDELNANNSTTNNNSNNIQSSRVNRANNRRFAADISAQKQMLGSETDILNLNALTKRKKPVSFARSAIHNWGLYALEPIAAKEMIIEYVGESIRQQVAEHRERSYLKTGIGSSYLFRIDENTVVDATKKGGIARFINHCCNPSCTAKIIKVEGKKRIVIYALRDIEANEELTYDYKFEKETNDAERIRCLCGAPGCKGYLN.

Composition is skewed to low complexity over residues 1–10 (MSYNPYRSRN), 27–38 (SDYNESSYNSSY), and 69–87 (SSAYSSDSSSRTYANSSSS). Disordered stretches follow at residues 1-136 (MSYN…GVNP), 179-217 (SKAERKTKQKKIRFNGESLSSHDVTDPRKSSTGSTSAYF), 365-406 (KRLK…KPNT), 510-531 (FNESSSSTSNNDNTDLSASNRK), and 624-747 (SFRK…EGEE). Polar residues predominate over residues 101–136 (IDGSTNGDLPTAGTQKHNIPPTNAISGTDATTGVNP). The span at 365–391 (KRLKKQQAIEDQKRRETEKAAKEKKLQ) shows a compositional bias: basic and acidic residues. Residues 392–406 (ESANSSHESRFKPNT) are compositionally biased toward polar residues. Over residues 510 to 529 (FNESSSSTSNNDNTDLSASN) the composition is skewed to low complexity. The span at 705 to 715 (PSKKKQKKTKL) shows a compositional bias: basic residues. Positions 912 to 917 (RANNRR) match the RxxxRR motif motif. In terms of domain architecture, SET spans 946–1063 (KPVSFARSAI…ANEELTYDYK (118 aa)). Tyrosine 1062 is a binding site for S-adenosyl-L-methionine. The region spanning 1072 to 1088 (ERIRCLCGAPGCKGYLN) is the Post-SET domain.

The protein belongs to the class V-like SAM-binding methyltransferase superfamily. In terms of assembly, component of the Set1C/COMPASS complex.

It localises to the nucleus. Its subcellular location is the chromosome. It carries out the reaction L-lysyl(4)-[histone H3] + 3 S-adenosyl-L-methionine = N(6),N(6),N(6)-trimethyl-L-lysyl(4)-[histone H3] + 3 S-adenosyl-L-homocysteine + 3 H(+). The enzyme catalyses N(6)-methyl-L-lysyl(4)-[histone H3] + S-adenosyl-L-methionine = N(6),N(6)-dimethyl-L-lysyl(4)-[histone H3] + S-adenosyl-L-homocysteine + H(+). The catalysed reaction is N(6),N(6)-dimethyl-L-lysyl(4)-[histone H3] + S-adenosyl-L-methionine = N(6),N(6),N(6)-trimethyl-L-lysyl(4)-[histone H3] + S-adenosyl-L-homocysteine + H(+). Catalytic component of the COMPASS (Set1C) complex that specifically mono-, di- and trimethylates histone H3 to form H3K4me1/2/3. Binds RNAs which might negatively affect its histone methyltransferase activity. COMPASS recognizes ubiquitinated H2B on one face of the nucleosome which stimulates the methylation of H3 on the opposing face. The polypeptide is Histone-lysine N-methyltransferase, H3 lysine-4 specific (SET1) (Debaryomyces hansenii (strain ATCC 36239 / CBS 767 / BCRC 21394 / JCM 1990 / NBRC 0083 / IGC 2968) (Yeast)).